We begin with the raw amino-acid sequence, 406 residues long: Calsequestrin-1 (406 aa).

The signal sequence occupies residues 1 to 34; that stretch reads MRATDRMGARAVSKLRLALLFVLVLGTPRSGVQG. Tyr-43 bears the Phosphotyrosine mark. Phosphoserine is present on Ser-81. Phosphothreonine is present on Thr-124. At Ser-216 the chain carries Phosphoserine. Asn-350 carries an N-linked (GlcNAc...) asparagine glycan. Positions 382–406 are disordered; it reads EGEINTEDDDDDDDDDDDDDDDDDD.

Belongs to the calsequestrin family. Monomer; increases in response to a depletion of intracellular calcium. Homodimer. Homotetramer and homopolymer. Can form linear homooligomers. Ca(2+) ions promote oligomerization. Interacts (via C-terminal end and preferentially with the monomeric form) with STIM1; this interaction increases in response to a depletion of intracellular calcium, decreases both STIM1 aggregation and clustering, interaction of STIM1 with ORAI1 and store-operated Ca(2+) entry (SOCE) activity. Interacts with ASPH and TRDN. Post-translationally, N-glycosylated. In terms of tissue distribution, detected in skeletal muscle and in smooth muscle from vas deferens, aorta and stomach (at protein level).

The protein localises to the endoplasmic reticulum. Its subcellular location is the sarcoplasmic reticulum. It localises to the sarcoplasmic reticulum lumen. The protein resides in the sarcoplasmic reticulum membrane. It is found in the mitochondrion matrix. In terms of biological role, calsequestrin is a high-capacity, moderate affinity, calcium-binding protein and thus acts as an internal calcium store in muscle. Calcium ions are bound by clusters of acidic residues at the protein surface, often at the interface between subunits. Can bind around 80 Ca(2+) ions. Regulates the release of lumenal Ca(2+) via the calcium release channel RYR1; this plays an important role in triggering muscle contraction. Negatively regulates store-operated Ca(2+) entry (SOCE) activity. In Rattus norvegicus (Rat), this protein is Calsequestrin-1 (Casq1).